The following is a 158-amino-acid chain: Cyclic pyranopterin monophosphate synthase (158 aa).

Substrate contacts are provided by residues 76-78 (MCH) and 114-115 (ME). Residue Asp129 is part of the active site.

The protein belongs to the MoaC family. As to quaternary structure, homohexamer; trimer of dimers.

The enzyme catalyses (8S)-3',8-cyclo-7,8-dihydroguanosine 5'-triphosphate = cyclic pyranopterin phosphate + diphosphate. It functions in the pathway cofactor biosynthesis; molybdopterin biosynthesis. Catalyzes the conversion of (8S)-3',8-cyclo-7,8-dihydroguanosine 5'-triphosphate to cyclic pyranopterin monophosphate (cPMP). In Clostridium perfringens (strain 13 / Type A), this protein is Cyclic pyranopterin monophosphate synthase.